We begin with the raw amino-acid sequence, 305 residues long: GMP synthase [glutamine-hydrolyzing] subunit B (305 aa).

Residues 2-185 enclose the GMPS ATP-PPase domain; sequence VEPTAFIDEK…LDLESIIAER (184 aa). 29-35 serves as a coordination point for ATP; it reads SGGVDSS.

In terms of assembly, heterodimer composed of a glutamine amidotransferase subunit (A) and a GMP-binding subunit (B).

It carries out the reaction XMP + L-glutamine + ATP + H2O = GMP + L-glutamate + AMP + diphosphate + 2 H(+). It participates in purine metabolism; GMP biosynthesis; GMP from XMP (L-Gln route): step 1/1. Functionally, catalyzes the synthesis of GMP from XMP. In Natronomonas pharaonis (strain ATCC 35678 / DSM 2160 / CIP 103997 / JCM 8858 / NBRC 14720 / NCIMB 2260 / Gabara) (Halobacterium pharaonis), this protein is GMP synthase [glutamine-hydrolyzing] subunit B.